We begin with the raw amino-acid sequence, 107 residues long: Small ribosomal subunit protein uS17 (107 aa).

It belongs to the universal ribosomal protein uS17 family. As to quaternary structure, part of the 30S ribosomal subunit.

One of the primary rRNA binding proteins, it binds specifically to the 5'-end of 16S ribosomal RNA. This chain is Small ribosomal subunit protein uS17, found in Nitrosopumilus maritimus (strain SCM1).